A 138-amino-acid polypeptide reads, in one-letter code: Large ribosomal subunit protein bL17 (138 aa).

It belongs to the bacterial ribosomal protein bL17 family. Part of the 50S ribosomal subunit. Contacts protein L32.

The protein is Large ribosomal subunit protein bL17 of Phenylobacterium zucineum (strain HLK1).